The sequence spans 214 residues: tRNA (guanine-N(7)-)-methyltransferase (214 aa).

Residues Glu-44, Glu-69, Asp-96, and Asp-118 each coordinate S-adenosyl-L-methionine. The active site involves Asp-118. Position 122 (Lys-122) interacts with substrate. The tract at residues 124–129 (RHEKRR) is interaction with RNA. Residues Asp-154 and 192–195 (TEYE) each bind substrate.

Belongs to the class I-like SAM-binding methyltransferase superfamily. TrmB family.

It catalyses the reaction guanosine(46) in tRNA + S-adenosyl-L-methionine = N(7)-methylguanosine(46) in tRNA + S-adenosyl-L-homocysteine. Its pathway is tRNA modification; N(7)-methylguanine-tRNA biosynthesis. In terms of biological role, catalyzes the formation of N(7)-methylguanine at position 46 (m7G46) in tRNA. The polypeptide is tRNA (guanine-N(7)-)-methyltransferase (Lacticaseibacillus casei (strain BL23) (Lactobacillus casei)).